Consider the following 191-residue polypeptide: Large ribosomal subunit protein uL5 (191 aa).

The protein belongs to the universal ribosomal protein uL5 family. Part of the 50S ribosomal subunit; part of the 5S rRNA/L5/L18/L25 subcomplex. Contacts the 5S rRNA and the P site tRNA. Forms a bridge to the 30S subunit in the 70S ribosome.

This is one of the proteins that bind and probably mediate the attachment of the 5S RNA into the large ribosomal subunit, where it forms part of the central protuberance. In the 70S ribosome it contacts protein S13 of the 30S subunit (bridge B1b), connecting the 2 subunits; this bridge is implicated in subunit movement. Contacts the P site tRNA; the 5S rRNA and some of its associated proteins might help stabilize positioning of ribosome-bound tRNAs. The polypeptide is Large ribosomal subunit protein uL5 (Corynebacterium glutamicum (strain R)).